The sequence spans 101 residues: Small ribosomal subunit protein uS14 (101 aa).

This sequence belongs to the universal ribosomal protein uS14 family. As to quaternary structure, part of the 30S ribosomal subunit. Contacts proteins S3 and S10.

Its function is as follows. Binds 16S rRNA, required for the assembly of 30S particles and may also be responsible for determining the conformation of the 16S rRNA at the A site. This Baumannia cicadellinicola subsp. Homalodisca coagulata protein is Small ribosomal subunit protein uS14.